Here is a 105-residue protein sequence, read N- to C-terminus: Small ribosomal subunit protein uS17 (105 aa).

It belongs to the universal ribosomal protein uS17 family. As to quaternary structure, part of the 30S ribosomal subunit. Contacts protein S12.

One of the primary rRNA binding proteins, it binds directly to 16S rRNA where it helps nucleate assembly of the platform and body of the 30S subunit by bringing together and stabilizing interactions between several different RNA helices. The combined cluster of proteins S8, S12 and S17 appears to hold together the shoulder and platform of the 30S subunit. In Thermus thermophilus (strain ATCC 27634 / DSM 579 / HB8), this protein is Small ribosomal subunit protein uS17.